Here is a 101-residue protein sequence, read N- to C-terminus: Protein Tat (101 aa).

Positions 1–20 (MDPVDPNIEPWNQPGSQPKT) are disordered. The interval 1–24 (MDPVDPNIEPWNQPGSQPKTACNQ) is interaction with human CREBBP. The segment at 1–48 (MDPVDPNIEPWNQPGSQPKTACNQCYCKRCCYHCQICFLKKGLGISNG) is transactivation. Zn(2+)-binding residues include cysteine 22, cysteine 25, and cysteine 27. Residues 22 to 37 (CNQCYCKRCCYHCQIC) form a cysteine-rich region. Lysine 28 carries the N6-acetyllysine; by host PCAF modification. Positions 30, 33, 34, and 37 each coordinate Zn(2+). Residues 38–48 (FLKKGLGISNG) are core. The interval 45–101 (ISNGRKKRRPRRTTPYNSENHQDPLRKQPLSQPRGEQTDPKESKKKVESKTKTDQFD) is disordered. Residues 49–57 (RKKRRPRRT) carry the Nuclear localization signal, RNA-binding (TAR), and protein transduction motif. The segment at 49–86 (RKKRRPRRTTPYNSENHQDPLRKQPLSQPRGEQTDPKE) is interaction with the host capping enzyme RNGTT. An N6-acetyllysine; by host EP300 and GCN5L2 mark is found at lysine 50 and lysine 51. Residues arginine 52 and arginine 53 each carry the asymmetric dimethylarginine; by host PRMT6 modification. Lysine 71 is covalently cross-linked (Glycyl lysine isopeptide (Lys-Gly) (interchain with G-Cter in ubiquitin)). The segment covering 80-101 (EQTDPKESKKKVESKTKTDQFD) has biased composition (basic and acidic residues).

Belongs to the lentiviruses Tat family. As to quaternary structure, interacts with host CCNT1. Associates with the P-TEFb complex composed at least of Tat, P-TEFb (CDK9 and CCNT1), TAR RNA, RNA Pol II. Recruits the HATs CREBBP, TAF1/TFIID, EP300, PCAF and GCN5L2. Interacts with host KAT5/Tip60; this interaction targets the latter to degradation. Interacts with the host deacetylase SIRT1. Interacts with host capping enzyme RNGTT; this interaction stimulates RNGTT. Binds to host KDR, and to the host integrins ITGAV/ITGB3 and ITGA5/ITGB1. Interacts with host KPNB1/importin beta-1 without previous binding to KPNA1/importin alpha-1. Interacts with EIF2AK2. Interacts with host nucleosome assembly protein NAP1L1; this interaction may be required for the transport of Tat within the nucleus, since the two proteins interact at the nuclear rim. Interacts with host C1QBP/SF2P32; this interaction involves lysine-acetylated Tat. Interacts with the host chemokine receptors CCR2, CCR3 and CXCR4. Interacts with host DPP4/CD26; this interaction may trigger an anti-proliferative effect. Interacts with host LDLR. Interacts with the host extracellular matrix metalloproteinase MMP1. Interacts with host PRMT6; this interaction mediates Tat's methylation. Interacts with, and is ubiquitinated by MDM2/Hdm2. Interacts with host PSMC3 and HTATIP2. Interacts with STAB1; this interaction may overcome SATB1-mediated repression of IL2 and IL2RA (interleukin) in T cells by binding to the same domain than HDAC1. Interacts (when acetylated) with human CDK13, thereby increasing HIV-1 mRNA splicing and promoting the production of the doubly spliced HIV-1 protein Nef. Interacts with host TBP; this interaction modulates the activity of transcriptional pre-initiation complex. Interacts with host RELA. Interacts with host PLSCR1; this interaction negatively regulates Tat transactivation activity by altering its subcellular distribution. Asymmetrical arginine methylation by host PRMT6 seems to diminish the transactivation capacity of Tat and affects the interaction with host CCNT1. Post-translationally, acetylation by EP300, CREBBP, GCN5L2/GCN5 and PCAF regulates the transactivation activity of Tat. EP300-mediated acetylation of Lys-50 promotes dissociation of Tat from the TAR RNA through the competitive binding to PCAF's bromodomain. In addition, the non-acetylated Tat's N-terminus can also interact with PCAF. PCAF-mediated acetylation of Lys-28 enhances Tat's binding to CCNT1. Lys-50 is deacetylated by SIRT1. In terms of processing, polyubiquitination by host MDM2 does not target Tat to degradation, but activates its transactivation function and fosters interaction with CCNT1 and TAR RNA. Phosphorylated by EIF2AK2 on serine and threonine residues adjacent to the basic region important for TAR RNA binding and function. Phosphorylation of Tat by EIF2AK2 is dependent on the prior activation of EIF2AK2 by dsRNA.

The protein localises to the host nucleus. The protein resides in the host nucleolus. It is found in the host cytoplasm. It localises to the secreted. Its function is as follows. Transcriptional activator that increases RNA Pol II processivity, thereby increasing the level of full-length viral transcripts. Recognizes a hairpin structure at the 5'-LTR of the nascent viral mRNAs referred to as the transactivation responsive RNA element (TAR) and recruits the cyclin T1-CDK9 complex (P-TEFb complex) that will in turn hyperphosphorylate the RNA polymerase II to allow efficient elongation. The CDK9 component of P-TEFb and other Tat-activated kinases hyperphosphorylate the C-terminus of RNA Pol II that becomes stabilized and much more processive. Other factors such as HTATSF1/Tat-SF1, SUPT5H/SPT5, and HTATIP2 are also important for Tat's function. Besides its effect on RNA Pol II processivity, Tat induces chromatin remodeling of proviral genes by recruiting the histone acetyltransferases (HATs) CREBBP, EP300 and PCAF to the chromatin. This also contributes to the increase in proviral transcription rate, especially when the provirus integrates in transcriptionally silent region of the host genome. To ensure maximal activation of the LTR, Tat mediates nuclear translocation of NF-kappa-B by interacting with host RELA. Through its interaction with host TBP, Tat may also modulate transcription initiation. Tat can reactivate a latently infected cell by penetrating in it and transactivating its LTR promoter. In the cytoplasm, Tat is thought to act as a translational activator of HIV-1 mRNAs. In terms of biological role, extracellular circulating Tat can be endocytosed by surrounding uninfected cells via the binding to several surface receptors such as CD26, CXCR4, heparan sulfate proteoglycans (HSPG) or LDLR. Neurons are rarely infected, but they internalize Tat via their LDLR. Through its interaction with nuclear HATs, Tat is potentially able to control the acetylation-dependent cellular gene expression. Modulates the expression of many cellular genes involved in cell survival, proliferation or in coding for cytokines or cytokine receptors. Tat plays a role in T-cell and neurons apoptosis. Tat induced neurotoxicity and apoptosis probably contribute to neuroAIDS. Circulating Tat also acts as a chemokine-like and/or growth factor-like molecule that binds to specific receptors on the surface of the cells, affecting many cellular pathways. In the vascular system, Tat binds to ITGAV/ITGB3 and ITGA5/ITGB1 integrins dimers at the surface of endothelial cells and competes with bFGF for heparin-binding sites, leading to an excess of soluble bFGF. This Homo sapiens (Human) protein is Protein Tat.